Here is a 727-residue protein sequence, read N- to C-terminus: Iron-sulfur clusters transporter atm1, mitochondrial (727 aa).

The disordered stretch occupies residues 46 to 97 (NSPLRKDASKEPALASNSKTTNPIPTQASASVNPPKDARNATTAKKDLLSET). Positions 60–77 (ASNSKTTNPIPTQASASV) are enriched in polar residues. A compositionally biased stretch (basic and acidic residues) spans 81 to 94 (KDARNATTAKKDLL). A helical transmembrane segment spans residues 131-152 (VGTALSLLVGAKILNVEVPFYF). The ABC transmembrane type-1 domain occupies 131 to 421 (VGTALSLLVG…LGSVYRELRQ (291 aa)). The Mitochondrial intermembrane portion of the chain corresponds to 153-175 (KSIVDSMNIDFATVGGTAYTVAG). A helical transmembrane segment spans residues 176–199 (SMIIAYGVTRIGATLFQELRNAVF). Topologically, residues 200-248 (ASVAQKAIRRVARNVFEHLLRLDLNFHLSRQTGGLTRAIDRGTKGISFL) are mitochondrial matrix. Residues 249 to 272 (LTSMVFHVVPTALEISLVCGILTY) traverse the membrane as a helical segment. Residue glutamine 273 is a topological domain, mitochondrial intermembrane. A helical transmembrane segment spans residues 274-294 (YGFQFAAITAATMVAYTAFTI). Residues 295–360 (TTTAWRTKFR…ASIKVTTSLA (66 aa)) are Mitochondrial matrix-facing. Residues 300-304 (RTKFR) and 363-366 (NSGQ) contribute to the glutathione site. A helical membrane pass occupies residues 361 to 379 (FLNSGQNMIFSSALAAMMY). At 380 to 394 (LAANGVANGNLTVGD) the chain is on the mitochondrial intermembrane side. The chain crosses the membrane as a helical span at residues 395–416 (LVMVNQLVFQLSVPLNFLGSVY). Glycine 413 lines the glutathione pocket. The Mitochondrial matrix portion of the chain corresponds to 417-727 (RELRQSLLDM…DMAPGPKAQQ (311 aa)). In terms of domain architecture, ABC transporter spans 456 to 692 (IRFENVTFGY…NGIYAELWNA (237 aa)). ATP-binding positions include tyrosine 465 and 489-500 (GPSGCGKSTILR). Residues 702–719 (EFERETERDDVESKERDM) are compositionally biased toward basic and acidic residues. Positions 702-727 (EFERETERDDVESKERDMAPGPKAQQ) are disordered.

The protein belongs to the ABC transporter superfamily. ABCB family. Heavy Metal importer (TC 3.A.1.210) subfamily. In terms of assembly, homodimer.

It is found in the mitochondrion inner membrane. Its function is as follows. Performs an essential function in the generation of cytoplasmic iron-sulfur proteins by mediating the ATP-dependent export of Fe/S cluster precursors synthesized by nfs1 and other mitochondrial proteins. Hydrolyzes ATP. Binds glutathione and may function by transporting a glutathione-conjugated iron-sulfur compound. This chain is Iron-sulfur clusters transporter atm1, mitochondrial, found in Aspergillus fumigatus (strain ATCC MYA-4609 / CBS 101355 / FGSC A1100 / Af293) (Neosartorya fumigata).